Here is a 526-residue protein sequence, read N- to C-terminus: Reelin domain-containing protein 1 (526 aa).

The first 23 residues, 1-23 (MRMQAALVGWACTTLCLASCSSA), serve as a signal peptide directing secretion. Residues 24–179 (FSHGASTVAC…SAHSDDRMEP (156 aa)) enclose the Reelin domain. Topologically, residues 24–443 (FSHGASTVAC…PLGIQLRTPQ (420 aa)) are extracellular. 3 disordered regions span residues 242-272 (DAET…PTLE), 294-336 (FASS…TVTQ), and 370-398 (LQTS…LPQS). Positions 245–271 (TLSQPSSHTATEGSINQQPSGDSNPTL) are enriched in polar residues. Polar residues predominate over residues 385-396 (SEASRASASFLP). The helical transmembrane segment at 444 to 462 (LGILLCLSATLGMALAAGL) threads the bilayer. Residues 463–526 (RYLHTQYCHQ…PSVGSKKTVL (64 aa)) are Cytoplasmic-facing.

It is found in the membrane. The chain is Reelin domain-containing protein 1 from Homo sapiens (Human).